Consider the following 395-residue polypeptide: S-adenosylmethionine synthase (395 aa).

Position 16 (H16) interacts with ATP. D18 contributes to the Mg(2+) binding site. E44 contributes to the K(+) binding site. L-methionine-binding residues include E57 and Q100. The tract at residues 100-110 is flexible loop; sequence QSPDIAQGVDD. Residues 174–176, 241–242, D250, 256–257, A273, and K277 contribute to the ATP site; these read DAK, RF, and RK. An L-methionine-binding site is contributed by D250. K281 serves as a coordination point for L-methionine.

This sequence belongs to the AdoMet synthase family. Homotetramer; dimer of dimers. Mg(2+) is required as a cofactor. The cofactor is K(+).

It is found in the cytoplasm. The enzyme catalyses L-methionine + ATP + H2O = S-adenosyl-L-methionine + phosphate + diphosphate. It functions in the pathway amino-acid biosynthesis; S-adenosyl-L-methionine biosynthesis; S-adenosyl-L-methionine from L-methionine: step 1/1. Its function is as follows. Catalyzes the formation of S-adenosylmethionine (AdoMet) from methionine and ATP. The overall synthetic reaction is composed of two sequential steps, AdoMet formation and the subsequent tripolyphosphate hydrolysis which occurs prior to release of AdoMet from the enzyme. The chain is S-adenosylmethionine synthase from Limosilactobacillus reuteri (strain DSM 20016) (Lactobacillus reuteri).